Reading from the N-terminus, the 339-residue chain is Sperm acrosome membrane-associated protein 6 (339 aa).

The signal sequence occupies residues 1–41 (MTSQRSLSSPQTRRPSVMGLISLVGSIVLLFLLIFRASTWA). A CXXC motif motif is present at residues 42–45 (CLFC). Cystine bridges form between C42–C155, C45–C158, C56–C70, C140–C163, C144–C169, and C186–C241. Residues 42 to 310 (CLFCFTTYEE…NPQALTLGNL (269 aa)) are Extracellular-facing. The CXXC motif signature appears at 155 to 158 (CSGC). Residues 166–251 (PLDCPVQDML…VILHDQRPLA (86 aa)) form the Ig-like domain. An N-linked (GlcNAc...) asparagine glycan is attached at N258. A helical membrane pass occupies residues 311–331 (FLLAATAALGSASVTLLVWLF). Over 332–339 (FRWYLSGN) the chain is Cytoplasmic.

It belongs to the SPACA6 family. As to quaternary structure, forms a complex with IZUMO1 and TMEM81 on spermatocyte cell membrane required for fertilization. Highly expressed in testis. Minor expression also detected in epididymis, seminal vesicle and ovary. Predominantly expressed in testicular germ cells during spermiogenesis. Most abundant in round spermatids and detected at lower levels in elongating spermatids.

The protein resides in the cytoplasmic vesicle. Its subcellular location is the secretory vesicle. It localises to the acrosome membrane. Sperm protein required for fusion of sperm with the egg membrane during fertilization. May regulate the expression of sperm surface protein DCST2. This chain is Sperm acrosome membrane-associated protein 6, found in Mus musculus (Mouse).